The sequence spans 291 residues: Bifunctional protein FolD (291 aa).

NADP(+) is bound by residues 173-175 (GRS) and serine 198.

This sequence belongs to the tetrahydrofolate dehydrogenase/cyclohydrolase family. In terms of assembly, homodimer.

It catalyses the reaction (6R)-5,10-methylene-5,6,7,8-tetrahydrofolate + NADP(+) = (6R)-5,10-methenyltetrahydrofolate + NADPH. The catalysed reaction is (6R)-5,10-methenyltetrahydrofolate + H2O = (6R)-10-formyltetrahydrofolate + H(+). The protein operates within one-carbon metabolism; tetrahydrofolate interconversion. In terms of biological role, catalyzes the oxidation of 5,10-methylenetetrahydrofolate to 5,10-methenyltetrahydrofolate and then the hydrolysis of 5,10-methenyltetrahydrofolate to 10-formyltetrahydrofolate. The polypeptide is Bifunctional protein FolD (Psychrobacter sp. (strain PRwf-1)).